The chain runs to 303 residues: Sodium/potassium-transporting ATPase subunit beta-1 (303 aa).

The Cytoplasmic segment spans residues 1 to 34 (MPAATKDSDGGWKKFLWNSEKKEFLGRTGGSWAK). The helical; Signal-anchor for type II membrane protein transmembrane segment at 35 to 55 (ILLFYVIFYGCLAGIFIGTIQ) threads the bilayer. At 56 to 303 (ALLLTINDFK…FDVKFTINES (248 aa)) the chain is on the extracellular side. An N-linked (GlcNAc...) asparagine glycan is attached at asparagine 113. 2 disulfides stabilise this stretch: cysteine 126/cysteine 149 and cysteine 159/cysteine 175. N-linked (GlcNAc...) asparagine glycans are attached at residues asparagine 194 and asparagine 264. An intrachain disulfide couples cysteine 214 to cysteine 275.

This sequence belongs to the X(+)/potassium ATPases subunit beta family. As to quaternary structure, the sodium/potassium-transporting ATPase is composed of a catalytic alpha subunit, an auxiliary non-catalytic beta subunit and an additional regulatory subunit. As to expression, detected in all tissues except liver and cardiac muscle. Highest levels found in intestine, ovary and kidney with marginally lower levels in brain, spleen, esophagus, eye and pancreas, intermediate levels in gill and low levels in white and red skeletal muscle.

It is found in the cell membrane. Its function is as follows. This is the non-catalytic component of the active enzyme, which catalyzes the hydrolysis of ATP coupled with the exchange of Na(+) and K(+) ions across the plasma membrane. The beta subunit regulates, through assembly of alpha/beta heterodimers, the number of sodium pumps transported to the plasma membrane. The polypeptide is Sodium/potassium-transporting ATPase subunit beta-1 (atp1b1) (Anguilla anguilla (European freshwater eel)).